Reading from the N-terminus, the 116-residue chain is Iron-sulfur cluster insertion protein ErpA (116 aa).

Residues Cys-44, Cys-108, and Cys-110 each contribute to the iron-sulfur cluster site.

This sequence belongs to the HesB/IscA family. Homodimer. It depends on iron-sulfur cluster as a cofactor.

Its function is as follows. Required for insertion of 4Fe-4S clusters for at least IspG. This Aeromonas salmonicida (strain A449) protein is Iron-sulfur cluster insertion protein ErpA.